The following is a 1315-amino-acid chain: Serine/threonine-protein kinase 36 (1315 aa).

The region spanning 4–254 (YHVLEMIGEG…WPDLLYHPFI (251 aa)) is the Protein kinase domain. Residues 10 to 18 (IGEGSFGRV) and Lys-33 each bind ATP. Asp-125 serves as the catalytic Proton acceptor. Disordered stretches follow at residues 312–345 (EAMQ…PRLG) and 365–405 (SWAE…RSTD). The segment covering 379–397 (RENRTTPDCERAFPEERPE) has biased composition (basic and acidic residues).

The protein belongs to the protein kinase superfamily. Ser/Thr protein kinase family. In terms of assembly, interacts with SPAG16 and KIF27. Mg(2+) is required as a cofactor.

It is found in the cytoplasm. Its subcellular location is the nucleus. The protein resides in the cytoskeleton. It localises to the cilium axoneme. The enzyme catalyses L-seryl-[protein] + ATP = O-phospho-L-seryl-[protein] + ADP + H(+). It catalyses the reaction L-threonyl-[protein] + ATP = O-phospho-L-threonyl-[protein] + ADP + H(+). Functionally, serine/threonine protein kinase which plays an important role in the sonic hedgehog (Shh) pathway by regulating the activity of GLI transcription factors. Controls the activity of the transcriptional regulators GLI1, GLI2 and GLI3 by opposing the effect of SUFU and promoting their nuclear localization. GLI2 requires an additional function of STK36 to become transcriptionally active, but the enzyme does not need to possess an active kinase catalytic site for this to occur. Required for postnatal development, possibly by regulating the homeostasis of cerebral spinal fluid or ciliary function. Essential for construction of the central pair apparatus of motile cilia. In Pongo abelii (Sumatran orangutan), this protein is Serine/threonine-protein kinase 36.